We begin with the raw amino-acid sequence, 151 residues long: Probable cGMP 3',5'-cyclic phosphodiesterase subunit delta (151 aa).

The protein belongs to the PDE6D/unc-119 family. Interacts with Pde6.

The protein localises to the nucleus. It localises to the cytoplasm. The chain is Probable cGMP 3',5'-cyclic phosphodiesterase subunit delta from Culex quinquefasciatus (Southern house mosquito).